A 291-amino-acid polypeptide reads, in one-letter code: Ribosomal RNA small subunit methyltransferase A (291 aa).

Positions 28, 30, 55, 77, 103, and 123 each coordinate S-adenosyl-L-methionine.

This sequence belongs to the class I-like SAM-binding methyltransferase superfamily. rRNA adenine N(6)-methyltransferase family. RsmA subfamily.

The protein resides in the cytoplasm. The enzyme catalyses adenosine(1518)/adenosine(1519) in 16S rRNA + 4 S-adenosyl-L-methionine = N(6)-dimethyladenosine(1518)/N(6)-dimethyladenosine(1519) in 16S rRNA + 4 S-adenosyl-L-homocysteine + 4 H(+). Specifically dimethylates two adjacent adenosines (A1518 and A1519) in the loop of a conserved hairpin near the 3'-end of 16S rRNA in the 30S particle. May play a critical role in biogenesis of 30S subunits. In Azorhizobium caulinodans (strain ATCC 43989 / DSM 5975 / JCM 20966 / LMG 6465 / NBRC 14845 / NCIMB 13405 / ORS 571), this protein is Ribosomal RNA small subunit methyltransferase A.